Here is a 234-residue protein sequence, read N- to C-terminus: tRNA (guanine-N(1)-)-methyltransferase (234 aa).

G113 lines the S-adenosyl-L-methionine pocket.

The protein belongs to the RNA methyltransferase TrmD family. In terms of assembly, homodimer.

It localises to the cytoplasm. It carries out the reaction guanosine(37) in tRNA + S-adenosyl-L-methionine = N(1)-methylguanosine(37) in tRNA + S-adenosyl-L-homocysteine + H(+). Its function is as follows. Specifically methylates guanosine-37 in various tRNAs. The protein is tRNA (guanine-N(1)-)-methyltransferase of Gluconobacter oxydans (strain 621H) (Gluconobacter suboxydans).